The following is a 462-amino-acid chain: Phosphoglycerate kinase, chloroplastic (462 aa).

The transit peptide at 1 to 61 (MALSMKMRAN…AGRSRIVVEA (61 aa)) directs the protein to the chloroplast. (2R)-3-phosphoglycerate is bound by residues A83, D84, N86, R101, S123, H124, G126, R127, R183, H215, and R216. Residue G261 participates in ADP binding. Position 261 (G261) interacts with CDP. AMP-binding residues include K263 and K267. K267 serves as a coordination point for ATP. Residue G285 coordinates ADP. G285 is a binding site for CDP. AMP-binding residues include G286 and G358. Residues G286 and G358 each coordinate ATP. The CDP site is built by G383 and F388. F388 is a binding site for ADP. E389 serves as a coordination point for AMP. Residues E389, D420, and S421 each contribute to the ATP site. D420 contacts Mg(2+).

It belongs to the phosphoglycerate kinase family. As to quaternary structure, monomer. Requires Mg(2+) as cofactor.

It localises to the plastid. It is found in the chloroplast. The enzyme catalyses (2R)-3-phosphoglycerate + ATP = (2R)-3-phospho-glyceroyl phosphate + ADP. It functions in the pathway carbohydrate biosynthesis; Calvin cycle. The sequence is that of Phosphoglycerate kinase, chloroplastic (PGK) from Volvox carteri (Green alga).